A 432-amino-acid chain; its full sequence is 3-phosphoshikimate 1-carboxyvinyltransferase (432 aa).

3-phosphoshikimate-binding residues include lysine 23, serine 24, and arginine 28. Lysine 23 is a binding site for phosphoenolpyruvate. Residues glycine 95 and arginine 123 each contribute to the phosphoenolpyruvate site. 4 residues coordinate 3-phosphoshikimate: serine 167, glutamine 169, aspartate 317, and lysine 344. Residue glutamine 169 participates in phosphoenolpyruvate binding. Aspartate 317 serves as the catalytic Proton acceptor. Residues arginine 348 and arginine 390 each contribute to the phosphoenolpyruvate site.

It belongs to the EPSP synthase family. Monomer.

It localises to the cytoplasm. It catalyses the reaction 3-phosphoshikimate + phosphoenolpyruvate = 5-O-(1-carboxyvinyl)-3-phosphoshikimate + phosphate. It participates in metabolic intermediate biosynthesis; chorismate biosynthesis; chorismate from D-erythrose 4-phosphate and phosphoenolpyruvate: step 6/7. Its function is as follows. Catalyzes the transfer of the enolpyruvyl moiety of phosphoenolpyruvate (PEP) to the 5-hydroxyl of shikimate-3-phosphate (S3P) to produce enolpyruvyl shikimate-3-phosphate and inorganic phosphate. This is 3-phosphoshikimate 1-carboxyvinyltransferase from Staphylococcus aureus (strain JH9).